The sequence spans 296 residues: Coatomer subunit epsilon (296 aa).

The protein belongs to the COPE family. In terms of assembly, oligomeric complex that consists of at least the alpha, beta, beta', gamma, delta, epsilon and zeta subunits. Interacts with the ESCRT-0 subunit VPS27.

The protein resides in the cytoplasm. It is found in the golgi apparatus membrane. Its subcellular location is the cytoplasmic vesicle. It localises to the COPI-coated vesicle membrane. In terms of biological role, the coatomer is a cytosolic protein complex that binds to dilysine motifs and reversibly associates with Golgi non-clathrin-coated vesicles, which further mediate biosynthetic protein transport from the ER, via the Golgi up to the trans Golgi network. The coatomer complex is required for budding from Golgi membranes, and is essential for the retrograde Golgi-to-ER transport of dilysine-tagged proteins. The protein is Coatomer subunit epsilon (SEC28) of Saccharomyces cerevisiae (strain ATCC 204508 / S288c) (Baker's yeast).